The primary structure comprises 342 residues: Protein RecA 1 (342 aa).

68–75 provides a ligand contact to ATP; it reads GNESSGKT.

Belongs to the RecA family.

The protein resides in the cytoplasm. In terms of biological role, can catalyze the hydrolysis of ATP in the presence of single-stranded DNA, the ATP-dependent uptake of single-stranded DNA by duplex DNA, and the ATP-dependent hybridization of homologous single-stranded DNAs. It interacts with LexA causing its activation and leading to its autocatalytic cleavage. This chain is Protein RecA 1, found in Myxococcus xanthus.